The chain runs to 337 residues: Succinylglutamate desuccinylase (337 aa).

3 residues coordinate Zn(2+): His59, Glu62, and His152. Glu216 is a catalytic residue.

It belongs to the AspA/AstE family. Succinylglutamate desuccinylase subfamily. The cofactor is Zn(2+).

It catalyses the reaction N-succinyl-L-glutamate + H2O = L-glutamate + succinate. The protein operates within amino-acid degradation; L-arginine degradation via AST pathway; L-glutamate and succinate from L-arginine: step 5/5. Functionally, transforms N(2)-succinylglutamate into succinate and glutamate. The polypeptide is Succinylglutamate desuccinylase (Ectopseudomonas mendocina (strain ymp) (Pseudomonas mendocina)).